The sequence spans 158 residues: Frataxin homolog, mitochondrial (158 aa).

The protein belongs to the frataxin family. In terms of assembly, monomer. Oligomer.

Its subcellular location is the mitochondrion. It catalyses the reaction 4 Fe(2+) + O2 + 4 H(+) = 4 Fe(3+) + 2 H2O. Functionally, promotes the biosynthesis of heme as well as the assembly and repair of iron-sulfur clusters by delivering Fe(2+) to proteins involved in these pathways. May play a role in the protection against iron-catalyzed oxidative stress through its ability to catalyze the oxidation of Fe(2+) to Fe(3+). May be able to store large amounts of the metal in the form of a ferrihydrite mineral by oligomerization. The polypeptide is Frataxin homolog, mitochondrial (Schizosaccharomyces pombe (strain 972 / ATCC 24843) (Fission yeast)).